The primary structure comprises 184 residues: Holliday junction branch migration complex subunit RuvA (184 aa).

Positions 1–64 (MIKAIEGVVT…EDANLLYGFL (64 aa)) are domain I. The tract at residues 65–134 (DANEQKMFEM…IAELSDTKLI (70 aa)) is domain II. The tract at residues 134-137 (ISDE) is flexible linker. The tract at residues 138 to 184 (SVPSYQNEALLALEALGFKREKIVKILPDCKSENTSDLIKEALKKLG) is domain III.

It belongs to the RuvA family. As to quaternary structure, homotetramer. Forms an RuvA(8)-RuvB(12)-Holliday junction (HJ) complex. HJ DNA is sandwiched between 2 RuvA tetramers; dsDNA enters through RuvA and exits via RuvB. An RuvB hexamer assembles on each DNA strand where it exits the tetramer. Each RuvB hexamer is contacted by two RuvA subunits (via domain III) on 2 adjacent RuvB subunits; this complex drives branch migration. In the full resolvosome a probable DNA-RuvA(4)-RuvB(12)-RuvC(2) complex forms which resolves the HJ.

Its subcellular location is the cytoplasm. Functionally, the RuvA-RuvB-RuvC complex processes Holliday junction (HJ) DNA during genetic recombination and DNA repair, while the RuvA-RuvB complex plays an important role in the rescue of blocked DNA replication forks via replication fork reversal (RFR). RuvA specifically binds to HJ cruciform DNA, conferring on it an open structure. The RuvB hexamer acts as an ATP-dependent pump, pulling dsDNA into and through the RuvAB complex. HJ branch migration allows RuvC to scan DNA until it finds its consensus sequence, where it cleaves and resolves the cruciform DNA. This chain is Holliday junction branch migration complex subunit RuvA, found in Campylobacter concisus (strain 13826).